Reading from the N-terminus, the 139-residue chain is MPTVSQLIKKRRTSKTTKTKAPALSYGFNILKKKAQHYASPQKMGVCLRVTTMTPKKPNSALRKFARVRLSNGSEVTAYIPGVGHSLQEHSSVLICGGRVKDLPGVRYHIIRGTLDATGVANRKQGRSRYGAKRPKAQK.

The residue at position 102 (Asp102) is a 3-methylthioaspartic acid.

It belongs to the universal ribosomal protein uS12 family. In terms of assembly, part of the 30S ribosomal subunit. Contacts proteins S8 and S17. May interact with IF1 in the 30S initiation complex.

Functionally, with S4 and S5 plays an important role in translational accuracy. Its function is as follows. Interacts with and stabilizes bases of the 16S rRNA that are involved in tRNA selection in the A site and with the mRNA backbone. Located at the interface of the 30S and 50S subunits, it traverses the body of the 30S subunit contacting proteins on the other side and probably holding the rRNA structure together. The combined cluster of proteins S8, S12 and S17 appears to hold together the shoulder and platform of the 30S subunit. The protein is Small ribosomal subunit protein uS12 of Phytoplasma australiense.